A 618-amino-acid chain; its full sequence is Dihydroxy-acid dehydratase (618 aa).

A Mg(2+)-binding site is contributed by Asp-81. A [2Fe-2S] cluster-binding site is contributed by Cys-122. Mg(2+)-binding residues include Asp-123 and Lys-124. Lys-124 is modified (N6-carboxylysine). Cys-195 is a [2Fe-2S] cluster binding site. Glu-492 is a Mg(2+) binding site. The Proton acceptor role is filled by Ser-518.

It belongs to the IlvD/Edd family. In terms of assembly, homodimer. [2Fe-2S] cluster is required as a cofactor. Mg(2+) serves as cofactor.

The catalysed reaction is (2R)-2,3-dihydroxy-3-methylbutanoate = 3-methyl-2-oxobutanoate + H2O. It carries out the reaction (2R,3R)-2,3-dihydroxy-3-methylpentanoate = (S)-3-methyl-2-oxopentanoate + H2O. Its pathway is amino-acid biosynthesis; L-isoleucine biosynthesis; L-isoleucine from 2-oxobutanoate: step 3/4. It functions in the pathway amino-acid biosynthesis; L-valine biosynthesis; L-valine from pyruvate: step 3/4. Functionally, functions in the biosynthesis of branched-chain amino acids. Catalyzes the dehydration of (2R,3R)-2,3-dihydroxy-3-methylpentanoate (2,3-dihydroxy-3-methylvalerate) into 2-oxo-3-methylpentanoate (2-oxo-3-methylvalerate) and of (2R)-2,3-dihydroxy-3-methylbutanoate (2,3-dihydroxyisovalerate) into 2-oxo-3-methylbutanoate (2-oxoisovalerate), the penultimate precursor to L-isoleucine and L-valine, respectively. This Zymomonas mobilis subsp. mobilis (strain ATCC 31821 / ZM4 / CP4) protein is Dihydroxy-acid dehydratase.